Reading from the N-terminus, the 277-residue chain is Ribosomal RNA small subunit methyltransferase A (277 aa).

Residues asparagine 20, leucine 22, glycine 47, glutamate 68, aspartate 93, and asparagine 114 each coordinate S-adenosyl-L-methionine.

The protein belongs to the class I-like SAM-binding methyltransferase superfamily. rRNA adenine N(6)-methyltransferase family. RsmA subfamily.

The protein localises to the cytoplasm. It catalyses the reaction adenosine(1518)/adenosine(1519) in 16S rRNA + 4 S-adenosyl-L-methionine = N(6)-dimethyladenosine(1518)/N(6)-dimethyladenosine(1519) in 16S rRNA + 4 S-adenosyl-L-homocysteine + 4 H(+). Its function is as follows. Specifically dimethylates two adjacent adenosines (A1518 and A1519) in the loop of a conserved hairpin near the 3'-end of 16S rRNA in the 30S particle. May play a critical role in biogenesis of 30S subunits. This Aliivibrio salmonicida (strain LFI1238) (Vibrio salmonicida (strain LFI1238)) protein is Ribosomal RNA small subunit methyltransferase A.